The primary structure comprises 174 residues: Inactive signal peptidase IA (174 aa).

Residues 1-7 (MKKVVKY) are Cytoplasmic-facing. Residues 8-28 (LISLILAIIIVLFVQTFVIVG) traverse the membrane as a helical segment. At 29–174 (HVIPNNDMSP…FSKWTIQFKS (146 aa)) the chain is on the extracellular side.

This sequence belongs to the peptidase S26 family.

It is found in the cell membrane. In terms of biological role, catalytically inactive. The protein is Inactive signal peptidase IA (spsA) of Staphylococcus aureus (strain Mu50 / ATCC 700699).